The chain runs to 1071 residues: Serine/threonine-protein phosphatase 6 regulatory ankyrin repeat subunit C (1071 aa).

28 ANK repeats span residues 7 to 36, 40 to 69, 73 to 102, 106 to 135, 139 to 168, 172 to 201, 205 to 234, 238 to 267, 271 to 301, 305 to 334, 338 to 367, 371 to 400, 422 to 451, 455 to 484, 488 to 539, 543 to 573, 578 to 607, 611 to 640, 645 to 674, 681 to 710, 714 to 743, 747 to 776, 784 to 814, 816 to 845, 852 to 881, 885 to 915, 919 to 951, and 955 to 984; these read SDQPPLVQAIFNRNADEVKLFLHKKDEVNA, ERRTPLHAAAWLGDVHIMDLLISAGANVNA, VWLTPLHRAAASRNERAVGLLLRKGADVTA, YWQTPLHIAAANRATRCVETLLPHVSSLNM, TGRAPLHHAAQSGYQEMVKLLLNKGANLSA, KDRQPIHWAAYLGHLEVVKLLVSQGSDKSC, RGYTPLHAAAASGHVDVVKYLLRNGAEIDE, FGNTALHVACYTGQEAVANELVNRGANVNQ, RGYTPLHLAAVSTNGALCLELLVNNGADVNM, EGKSPLHMAAIHGRFTRSQILIQNGGEIDC, YGNTPLHVAAKYGHELLISTLMTNGADTAR, HGMFPLHLAVLYGSSDCCRKLLSSGQLYSI, FGRTCLHAAASGGNIECLNLLLSSGADMNK, FGRTPLHYAAANGRYQCVVVLVGAGAEVNE, SGCT…DPCL, KGYSAVHYAAAHGNKQNLELLLEMCFNTLGD, GSISPLHLAVESGHWECVTVLIESGVCVDV, VGRSVLYLASQRGHSRCVELLLSQSASCLL, SKWGPLHVAAANGHSECLRMLLCSEGGADL, EGQTPLMLAVLGGHTDCVHLLLERGACPDM, RGRTALHRGAVMGREDCLTALLSHNVSVLS, QGRSALHLAASCGHADILSNLLSAADHSQP, HGYTPAHWAAYHGHEDCLEVLLELKPCSIQE, NPFTPLHCALINGHSGSAELLLESSVCNSL, KGRTPLHAAAVAEDVAGLQLVLRQGADIDA, SGRSALMVAADYGQSGAVALLLHRAKADLSL, NKNTALHLACSKAHEMCAMLILKEIHNPILINA, and MLQMPLHIAARNGLATVVQALLNRGATVLA.

As to quaternary structure, protein phosphatase 6 (PP6) holoenzyme is proposed to be a heterotrimeric complex formed by the catalytic subunit, a SAPS domain-containing subunit (PP6R) and an ankyrin repeat-domain containing regulatory subunit (ARS).

Functionally, putative regulatory subunit of protein phosphatase 6 (PP6) that may be involved in the recognition of phosphoprotein substrates. In Danio rerio (Zebrafish), this protein is Serine/threonine-protein phosphatase 6 regulatory ankyrin repeat subunit C (ankrd52).